Here is a 234-residue protein sequence, read N- to C-terminus: MTPHINAKIGDFYPQCLLCGDPLRVSYIAKKFLQDAKEITNVRNMLGFSGKYKGKGISLMGHGMGIASCTIYVTELIKTYQVKELLRIGTCGAISPKVGLKDIIMAMGASTDSKTNRVRFLNHDLSATPDFELSLRAYQTAKRLGIDLKVGNVFSSDFFYSFETHAFDLMVQYNHLAIEMEAAGLYATAMELNAKALCLCSVSDHLITKEALSPKERVESFDNMIILALEMMTQ.

Residue His-4 coordinates a purine D-ribonucleoside. Phosphate contacts are provided by residues Gly-20, Arg-24, Arg-43, and 87-90 (RIGT). A purine D-ribonucleoside-binding positions include 179–181 (EME) and 203–204 (SD). Asp-204 serves as the catalytic Proton donor.

The protein belongs to the PNP/UDP phosphorylase family. Homohexamer; trimer of homodimers.

It catalyses the reaction a purine D-ribonucleoside + phosphate = a purine nucleobase + alpha-D-ribose 1-phosphate. It carries out the reaction a purine 2'-deoxy-D-ribonucleoside + phosphate = a purine nucleobase + 2-deoxy-alpha-D-ribose 1-phosphate. Its function is as follows. Catalyzes the reversible phosphorolytic breakdown of the N-glycosidic bond in the beta-(deoxy)ribonucleoside molecules, with the formation of the corresponding free purine bases and pentose-1-phosphate. The sequence is that of Purine nucleoside phosphorylase DeoD-type from Helicobacter pylori (strain Shi470).